A 554-amino-acid chain; its full sequence is Alpha-taxilin (554 aa).

Residues 1-66 (MKNQDKKNGP…ARAKAAQPGA (66 aa)) are disordered. Phosphoserine is present on Ser71. A disordered region spans residues 85 to 166 (YCVDNNQGGP…RRPQEKKKAK (82 aa)). Positions 91–103 (QGGPAEEGAQGEP) are enriched in low complexity. Positions 143–158 (EEIRASDEVGDRDHRR) are enriched in basic and acidic residues. Positions 186–491 (EEKLAALCKK…NKRVQDLTAG (306 aa)) form a coiled coil. Positions 492–554 (GITDIGSERR…GPGEPTPATA (63 aa)) are disordered. A phosphoserine mark is found at Ser515 and Ser523.

This sequence belongs to the taxilin family. Binds to the C-terminal coiled coil region of syntaxin family members STX1A, STX3A and STX4A, but not when these proteins are complexed with SNAP25, VAMP2 or STXBP1, suggesting that it interacts with syntaxins that do not form the SNARE complex.

Functionally, may be involved in intracellular vesicle traffic and potentially in calcium-dependent exocytosis in neuroendocrine cells. The protein is Alpha-taxilin (Txlna) of Mus musculus (Mouse).